The following is a 500-amino-acid chain: LEM protein 2 (500 aa).

One can recognise an LEM domain in the interval 1–45; the sequence is MVDVEKMSDAELRAELNVRGANVGPVTGTTRSLYEKKLKKLLSGG. At 1–325 the chain is on the nuclear side; that stretch reads MVDVEKMSDA…VKQTNIFNEA (325 aa). Residues 39–202 form a disordered region; the sequence is KKLLSGGAKT…RRITSVPGLI (164 aa). The segment covering 46-57 has biased composition (low complexity); it reads AKTPARPTVAKP. The span at 58–75 shows a compositional bias: pro residues; that stretch reads APKPTPKSAPAPKSPKSP. Residues 77–89 show a composition bias toward low complexity; it reads ARRSIPRAAATAA. Residues 103–122 are compositionally biased toward acidic residues; sequence EEMSDSDDDMRDDDDDDEEI. 2 stretches are compositionally biased toward low complexity: residues 130 to 141 and 168 to 197; these read SSFRSANSTASS and NTPR…RITS. The chain crosses the membrane as a helical span at residues 326 to 346; sequence IYFALYVILILFVVLGIAYAL. Topologically, residues 347–378 are perinuclear space; the sequence is TTTHRPKTADFSGYWGVLKAAGRDSLNFFYNY. A helical membrane pass occupies residues 379 to 399; that stretch reads AILPVVSLGIFVVLGAGIYFG. Residues 400-500 lie on the Nuclear side of the membrane; it reads HRKYKEAKEQ…WIGNQSQKRW (101 aa).

Interacts with lmn-1. Interacts (via LEM domain and the C-terminal nuclear domain) with baf-1. Ubiquitous. High expression in germline and intestine.

The protein resides in the nucleus inner membrane. The protein localises to the nucleus envelope. It localises to the chromosome. Functionally, nuclear lamina-associated inner nuclear membrane protein that is involved in cell division, nuclear structure organization, maintenance of nuclear envelope integrity and nuclear envelope reformation after mitosis. In interphase cells, plays a role in anchoring and spatial arrangement of chromosome arms at the nuclear periphery, forming so-called lem-2 subdomains. Both arms of autosomes but only the left arm of the X chromosome are anchored in lem-2 subdomains; sequences bound by lem-2 are mainly repetitive chromosome sequences and inactive genes. Involved in chromosome segregation and cell division, probably via its interaction with the nuclear intermediate filament protein lmn-1, the main component of nuclear lamina. Required to organize the distribution of lmn-1, nuclear pore complexes (NPCs) and chromatin in mitotically active cells. Involved in the nuclear positioning and efficient anchoring of microtubule-organizing centers (MTOCs) to the nuclear envelope during mitosis as well as on maintaining correct nuclear morphology. Contributes to closure of nuclear envelope (NE) holes and prevents excess nuclear membranes after meiosis and mitosis. Together with emr-1, plays a role in baf-1 enrichment at the nuclear envelope in anaphase. Together with emr-1, involved in muscle cell attachment to hypodermal cells, as well as muscle cell location and sarcomere organization. May play a role in radiation-induced DNA damage repair response. This chain is LEM protein 2 (lem-2), found in Caenorhabditis elegans.